We begin with the raw amino-acid sequence, 183 residues long: Nucleoplasmin-like protein NO29 (183 aa).

The span at 126–166 (SDDEDLSGSEEEMEDEEEEEDDDDDDDDDDDDDDDDDEEEI) shows a compositional bias: acidic residues. The disordered stretch occupies residues 126–183 (SDDEDLSGSEEEMEDEEEEEDDDDDDDDDDDDDDDDDEEEITPIKPAKKPLKTLSRTF).

Belongs to the nucleoplasmin family.

The protein resides in the nucleus. It is found in the nucleolus. The polypeptide is Nucleoplasmin-like protein NO29 (Xenopus laevis (African clawed frog)).